We begin with the raw amino-acid sequence, 163 residues long: ATP synthase subunit b 1 (163 aa).

A helical membrane pass occupies residues 5-25 (FDATFFAFVGLILFLALVVYL).

It belongs to the ATPase B chain family. In terms of assembly, F-type ATPases have 2 components, F(1) - the catalytic core - and F(0) - the membrane proton channel. F(1) has five subunits: alpha(3), beta(3), gamma(1), delta(1), epsilon(1). F(0) has three main subunits: a(1), b(2) and c(10-14). The alpha and beta chains form an alternating ring which encloses part of the gamma chain. F(1) is attached to F(0) by a central stalk formed by the gamma and epsilon chains, while a peripheral stalk is formed by the delta and b chains.

Its subcellular location is the cell inner membrane. Functionally, f(1)F(0) ATP synthase produces ATP from ADP in the presence of a proton or sodium gradient. F-type ATPases consist of two structural domains, F(1) containing the extramembraneous catalytic core and F(0) containing the membrane proton channel, linked together by a central stalk and a peripheral stalk. During catalysis, ATP synthesis in the catalytic domain of F(1) is coupled via a rotary mechanism of the central stalk subunits to proton translocation. Its function is as follows. Component of the F(0) channel, it forms part of the peripheral stalk, linking F(1) to F(0). This chain is ATP synthase subunit b 1, found in Rhizobium etli (strain ATCC 51251 / DSM 11541 / JCM 21823 / NBRC 15573 / CFN 42).